We begin with the raw amino-acid sequence, 172 residues long: Adenine phosphoribosyltransferase (172 aa).

It belongs to the purine/pyrimidine phosphoribosyltransferase family. Homodimer.

It localises to the cytoplasm. The enzyme catalyses AMP + diphosphate = 5-phospho-alpha-D-ribose 1-diphosphate + adenine. Its pathway is purine metabolism; AMP biosynthesis via salvage pathway; AMP from adenine: step 1/1. In terms of biological role, catalyzes a salvage reaction resulting in the formation of AMP, that is energically less costly than de novo synthesis. The chain is Adenine phosphoribosyltransferase from Exiguobacterium sp. (strain ATCC BAA-1283 / AT1b).